A 399-amino-acid chain; its full sequence is tRNA-specific 2-thiouridylase MnmA (399 aa).

ATP contacts are provided by residues 18 to 25 and L44; that span reads AMSGGVDS. C112 (nucleophile) is an active-site residue. C112 and C213 are oxidised to a cystine. Residue G136 participates in ATP binding. The interval 163-165 is interaction with tRNA; that stretch reads RDQ. The active-site Cysteine persulfide intermediate is the C213.

It belongs to the MnmA/TRMU family.

Its subcellular location is the cytoplasm. The catalysed reaction is S-sulfanyl-L-cysteinyl-[protein] + uridine(34) in tRNA + AH2 + ATP = 2-thiouridine(34) in tRNA + L-cysteinyl-[protein] + A + AMP + diphosphate + H(+). Its function is as follows. Catalyzes the 2-thiolation of uridine at the wobble position (U34) of tRNA, leading to the formation of s(2)U34. This Rhizobium rhizogenes (strain K84 / ATCC BAA-868) (Agrobacterium radiobacter) protein is tRNA-specific 2-thiouridylase MnmA.